Reading from the N-terminus, the 185-residue chain is Ribosome-recycling factor (185 aa).

It belongs to the RRF family.

The protein localises to the cytoplasm. In terms of biological role, responsible for the release of ribosomes from messenger RNA at the termination of protein biosynthesis. May increase the efficiency of translation by recycling ribosomes from one round of translation to another. In Rhodococcus erythropolis (strain PR4 / NBRC 100887), this protein is Ribosome-recycling factor.